A 658-amino-acid chain; its full sequence is Biosynthetic arginine decarboxylase (658 aa).

Lysine 127 carries the post-translational modification N6-(pyridoxal phosphate)lysine. 307 to 317 (FDVGGGLGVDY) is a binding site for substrate.

The protein belongs to the Orn/Lys/Arg decarboxylase class-II family. SpeA subfamily. It depends on Mg(2+) as a cofactor. Pyridoxal 5'-phosphate serves as cofactor.

The catalysed reaction is L-arginine + H(+) = agmatine + CO2. It functions in the pathway amine and polyamine biosynthesis; agmatine biosynthesis; agmatine from L-arginine: step 1/1. Catalyzes the biosynthesis of agmatine from arginine. The polypeptide is Biosynthetic arginine decarboxylase (Salmonella typhi).